We begin with the raw amino-acid sequence, 74 residues long: Protein SlyX homolog (74 aa).

Belongs to the SlyX family.

The chain is Protein SlyX homolog from Aliivibrio salmonicida (strain LFI1238) (Vibrio salmonicida (strain LFI1238)).